Here is a 402-residue protein sequence, read N- to C-terminus: Probable glutamate 5-kinase (402 aa).

Substrate is bound by residues S58, D145, and N157. ATP-binding positions include 177–178 and 218–224; these read TD and TGGMKTK. Residues 295 to 373 enclose the PUA domain; that stretch reads HGSLEIDRGA…KEIASILGYN (79 aa).

It belongs to the glutamate 5-kinase family.

The protein resides in the cytoplasm. It carries out the reaction L-glutamate + ATP = L-glutamyl 5-phosphate + ADP. The protein operates within amino-acid biosynthesis; L-proline biosynthesis; L-glutamate 5-semialdehyde from L-glutamate: step 1/2. In terms of biological role, catalyzes the transfer of a phosphate group to glutamate to form glutamate 5-phosphate which rapidly cyclizes to 5-oxoproline. This is Probable glutamate 5-kinase from Schizosaccharomyces pombe (strain 972 / ATCC 24843) (Fission yeast).